The primary structure comprises 200 residues: MKFLLFCCLFGTFLATGMCIDCEHCVVWGQNCTGWKETCGENEDTCVTYQTEVIRPPLSITFTAKTCGTSDTCHLDYVEANPHNELTLRAKRACCTGDECQTLPPPVLEPQVNRPNGLQCPGCIGLTSTECNEYLVSCQGSENQCLTIILKKPDFSLSEMSFKGCASENLCLLFEKKFWRFLEASEVDVKCTPAVPQTSQ.

The first 19 residues, 1–19 (MKFLLFCCLFGTFLATGMC), serve as a signal peptide directing secretion. 8 disulfides stabilise this stretch: cysteine 22/cysteine 46, cysteine 25/cysteine 32, cysteine 39/cysteine 67, cysteine 73/cysteine 94, cysteine 95/cysteine 100, cysteine 120/cysteine 145, cysteine 138/cysteine 165, and cysteine 171/cysteine 191.

Belongs to the CNF-like-inhibitor family. In terms of assembly, heteromer composed of subunit A and subunit B.

It localises to the secreted. Its function is as follows. Inhibits the enzymatic activity of the phospholipase A2 (PLA2). This is Phospholipase A2 inhibitor gamma subunit B from Elaphe climacophora (Japanese rat snake).